A 402-amino-acid chain; its full sequence is Dihydrolipoyllysine-residue acetyltransferase component of pyruvate dehydrogenase complex (402 aa).

Positions 2–77 constitute a Lipoyl-binding domain; sequence ANEFKFTDVG…HIGQVMAVID (76 aa). At Lys43 the chain carries N6-lipoyllysine. 2 disordered regions span residues 82–110 and 143–172; these read AAAP…APVT and PQPT…PSGE. Pro residues-rich tracts occupy residues 87-107 and 143-162; these read APQP…PTPA and PQPT…PTPA. The active site involves His374.

Belongs to the 2-oxoacid dehydrogenase family. Forms a 24-polypeptide structural core with octahedral symmetry. The cofactor is (R)-lipoate.

The catalysed reaction is N(6)-[(R)-dihydrolipoyl]-L-lysyl-[protein] + acetyl-CoA = N(6)-[(R)-S(8)-acetyldihydrolipoyl]-L-lysyl-[protein] + CoA. The pyruvate dehydrogenase complex catalyzes the overall conversion of pyruvate to acetyl-CoA and CO(2). It contains multiple copies of three enzymatic components: pyruvate dehydrogenase (E1), dihydrolipoamide acetyltransferase (E2) and lipoamide dehydrogenase (E3). This Mycoplasma pneumoniae (strain ATCC 29342 / M129 / Subtype 1) (Mycoplasmoides pneumoniae) protein is Dihydrolipoyllysine-residue acetyltransferase component of pyruvate dehydrogenase complex (pdhC).